The sequence spans 374 residues: Muconate cycloisomerase 1 (374 aa).

This sequence belongs to the cycloisomerase 2 family. Homotetramer.

The enzyme catalyses (S)-muconolactone = cis,cis-muconate + H(+). It functions in the pathway aromatic compound metabolism; beta-ketoadipate pathway; 5-oxo-4,5-dihydro-2-furylacetate from catechol: step 2/3. Catalyzes a syn cycloisomerization. In Cutaneotrichosporon cutaneum (Yeast), this protein is Muconate cycloisomerase 1.